The following is a 95-amino-acid chain: Parvalbumin beta 3 (95 aa).

Ala1 carries the post-translational modification N-acetylalanine. EF-hand domains lie at 39-66 and 77-95; these read FFAI…FSAG and DVDG…LVKA. Positions 44, 46, 48, 50, 52, 55, 77, 79, 81, 83, and 88 each coordinate Ca(2+).

It belongs to the parvalbumin family.

In terms of biological role, in muscle, parvalbumin is thought to be involved in relaxation after contraction. It binds two calcium ions. This Merluccius paradoxus (Deep-water Cape hake) protein is Parvalbumin beta 3.